A 184-amino-acid polypeptide reads, in one-letter code: Transposon Tn917 resolvase (184 aa).

A Resolvase/invertase-type recombinase catalytic domain is found at 1–134; the sequence is MIFGYARVST…SGLKAARVRG (134 aa). Ser9 serves as the catalytic O-(5'-phospho-DNA)-serine intermediate. The H-T-H motif DNA-binding region spans 161–180; that stretch reads IRQILDASKLSKTTFYRYLN.

It belongs to the site-specific recombinase resolvase family.

Resolvase catalyzes the resolution (a site-specific recombination) of the cointegrated replicon to yield the final transposition products. In Enterococcus faecalis (Streptococcus faecalis), this protein is Transposon Tn917 resolvase (tnpR).